Consider the following 692-residue polypeptide: UvrABC system protein B (692 aa).

The region spanning 32–187 (ENIENGEKAQ…LLNDLVGIQF (156 aa)) is the Helicase ATP-binding domain. 45–52 (GATGTGKT) serves as a coordination point for ATP. The Beta-hairpin motif lies at 98-121 (YYDYYQPEAYVPSSDTYIEKDSSV). The region spanning 436-631 (QIDDLVGEIH…TIKKEIRDLI (196 aa)) is the Helicase C-terminal domain. A UVR domain is found at 656–691 (KALVKKLEKEMQQAAAALDFEGAAQLRDMVLELRAM).

The protein belongs to the UvrB family. In terms of assembly, forms a heterotetramer with UvrA during the search for lesions. Interacts with UvrC in an incision complex.

It is found in the cytoplasm. Its function is as follows. The UvrABC repair system catalyzes the recognition and processing of DNA lesions. A damage recognition complex composed of 2 UvrA and 2 UvrB subunits scans DNA for abnormalities. Upon binding of the UvrA(2)B(2) complex to a putative damaged site, the DNA wraps around one UvrB monomer. DNA wrap is dependent on ATP binding by UvrB and probably causes local melting of the DNA helix, facilitating insertion of UvrB beta-hairpin between the DNA strands. Then UvrB probes one DNA strand for the presence of a lesion. If a lesion is found the UvrA subunits dissociate and the UvrB-DNA preincision complex is formed. This complex is subsequently bound by UvrC and the second UvrB is released. If no lesion is found, the DNA wraps around the other UvrB subunit that will check the other stand for damage. In Lactococcus lactis subsp. cremoris (strain MG1363), this protein is UvrABC system protein B.